A 273-amino-acid chain; its full sequence is NH(3)-dependent NAD(+) synthetase (273 aa).

46-53 lines the ATP pocket; that stretch reads GISGGQDS. Asp52 is a binding site for Mg(2+). Residue Arg139 participates in deamido-NAD(+) binding. Thr159 contributes to the ATP binding site. Residue Glu164 participates in Mg(2+) binding. Lys172 and Asp179 together coordinate deamido-NAD(+). ATP-binding residues include Lys188 and Thr210. A deamido-NAD(+)-binding site is contributed by 259-260; that stretch reads HK.

Belongs to the NAD synthetase family. In terms of assembly, homodimer.

It catalyses the reaction deamido-NAD(+) + NH4(+) + ATP = AMP + diphosphate + NAD(+) + H(+). It participates in cofactor biosynthesis; NAD(+) biosynthesis; NAD(+) from deamido-NAD(+) (ammonia route): step 1/1. Its function is as follows. Catalyzes the ATP-dependent amidation of deamido-NAD to form NAD. Uses ammonia as a nitrogen source. In Streptococcus thermophilus (strain ATCC BAA-250 / LMG 18311), this protein is NH(3)-dependent NAD(+) synthetase.